Reading from the N-terminus, the 190-residue chain is Segregation and condensation protein B (190 aa).

Belongs to the ScpB family. In terms of assembly, homodimer. Homodimerization may be required to stabilize the binding of ScpA to the Smc head domains. Component of a cohesin-like complex composed of ScpA, ScpB and the Smc homodimer, in which ScpA and ScpB bind to the head domain of Smc. The presence of the three proteins is required for the association of the complex with DNA.

The protein resides in the cytoplasm. Its function is as follows. Participates in chromosomal partition during cell division. May act via the formation of a condensin-like complex containing Smc and ScpA that pull DNA away from mid-cell into both cell halves. The chain is Segregation and condensation protein B from Bacillus cereus (strain ATCC 14579 / DSM 31 / CCUG 7414 / JCM 2152 / NBRC 15305 / NCIMB 9373 / NCTC 2599 / NRRL B-3711).